The primary structure comprises 456 residues: Adenylosuccinate lyase (456 aa).

N(6)-(1,2-dicarboxyethyl)-AMP is bound by residues 15-16 (RY), 90-92 (NHD), and 122-123 (TS). H171 (proton donor/acceptor) is an active-site residue. Q248 lines the N(6)-(1,2-dicarboxyethyl)-AMP pocket. The Proton donor/acceptor role is filled by S296. N(6)-(1,2-dicarboxyethyl)-AMP-binding positions include S297, 302 to 304 (KVN), N310, R336, and 341 to 345 (STVLR).

Belongs to the lyase 1 family. Adenylosuccinate lyase subfamily. In terms of assembly, homotetramer. Residues from neighboring subunits contribute catalytic and substrate-binding residues to each active site.

The enzyme catalyses N(6)-(1,2-dicarboxyethyl)-AMP = fumarate + AMP. It carries out the reaction (2S)-2-[5-amino-1-(5-phospho-beta-D-ribosyl)imidazole-4-carboxamido]succinate = 5-amino-1-(5-phospho-beta-D-ribosyl)imidazole-4-carboxamide + fumarate. The protein operates within purine metabolism; AMP biosynthesis via de novo pathway; AMP from IMP: step 2/2. It functions in the pathway purine metabolism; IMP biosynthesis via de novo pathway; 5-amino-1-(5-phospho-D-ribosyl)imidazole-4-carboxamide from 5-amino-1-(5-phospho-D-ribosyl)imidazole-4-carboxylate: step 2/2. Functionally, catalyzes two reactions in de novo purine nucleotide biosynthesis. Catalyzes the breakdown of 5-aminoimidazole- (N-succinylocarboxamide) ribotide (SAICAR or 2-[5-amino-1-(5-phospho-beta-D-ribosyl)imidazole-4-carboxamido]succinate) to 5-aminoimidazole-4-carboxamide ribotide (AICAR or 5-amino-1-(5-phospho-beta-D-ribosyl)imidazole-4-carboxamide) and fumarate, and of adenylosuccinate (ADS or N(6)-(1,2-dicarboxyethyl)-AMP) to adenosine monophosphate (AMP) and fumarate. The chain is Adenylosuccinate lyase (purB) from Pseudomonas aeruginosa (strain ATCC 15692 / DSM 22644 / CIP 104116 / JCM 14847 / LMG 12228 / 1C / PRS 101 / PAO1).